A 137-amino-acid polypeptide reads, in one-letter code: Small integral membrane protein 9 (137 aa).

The N-terminal stretch at 1 to 23 is a signal peptide; that stretch reads MKPLKLFCIGLLLCPLVCLLLET. The Extracellular portion of the chain corresponds to 24 to 84; it reads APPPSALLTL…NHLSDFFKSS (61 aa). The helical transmembrane segment at 85 to 105 threads the bilayer; it reads IPPAAIFALFVTTAIMRAAIV. The Cytoplasmic segment spans residues 106–137; the sequence is NKRLEEPHRQWTIDQRSSLEMQNMNLIKLFGG.

Its subcellular location is the cell membrane. The protein is Small integral membrane protein 9 (Smim9) of Mus musculus (Mouse).